Here is a 251-residue protein sequence, read N- to C-terminus: Putative ATP-binding protein Rv3427c in insertion sequence (251 aa).

108–115 serves as a coordination point for ATP; that stretch reads GPVGVGKT.

This sequence belongs to the IS21/IS1162 putative ATP-binding protein family.

The protein is Putative ATP-binding protein Rv3427c in insertion sequence of Mycobacterium tuberculosis (strain ATCC 25618 / H37Rv).